A 266-amino-acid polypeptide reads, in one-letter code: Interleukin-1 beta (266 aa).

A propeptide spanning residues 1–113 is cleaved from the precursor; it reads MAPVPEPINE…ETSSDEFLCD (113 aa).

This sequence belongs to the IL-1 family. As to quaternary structure, monomer. In its precursor form, weakly interacts with full-length MEFV; the mature cytokine does not interact at all. Interacts with integrins ITGAV:ITGBV and ITGA5:ITGB1; integrin-binding is required for IL1B signaling. Interacts with cargo receptor TMED10; the interaction is direct and is required for the secretion of IL1B mature form. Interacts with HSP90AB1; the interaction facilitates cargo translocation into the ERGIC. Interacts with HSP90B1; the interaction facilitates cargo translocation into the ERGIC.

It is found in the cytoplasm. The protein resides in the cytosol. The protein localises to the secreted. Its subcellular location is the lysosome. It localises to the extracellular exosome. Functionally, potent pro-inflammatory cytokine. Initially discovered as the major endogenous pyrogen, induces prostaglandin synthesis, neutrophil influx and activation, T-cell activation and cytokine production, B-cell activation and antibody production, and fibroblast proliferation and collagen production. Promotes Th17 differentiation of T-cells. Synergizes with IL12/interleukin-12 to induce IFNG synthesis from T-helper 1 (Th1) cells. Plays a role in angiogenesis by inducing VEGF production synergistically with TNF and IL6. Involved in transduction of inflammation downstream of pyroptosis: its mature form is specifically released in the extracellular milieu by passing through the gasdermin-D (GSDMD) pore. In Cervus elaphus (Red deer), this protein is Interleukin-1 beta (IL1B).